We begin with the raw amino-acid sequence, 233 residues long: 2,3,4,5-tetrahydropyridine-2,6-dicarboxylate N-acetyltransferase (233 aa).

Belongs to the transferase hexapeptide repeat family. DapH subfamily.

The enzyme catalyses (S)-2,3,4,5-tetrahydrodipicolinate + acetyl-CoA + H2O = L-2-acetamido-6-oxoheptanedioate + CoA. Its pathway is amino-acid biosynthesis; L-lysine biosynthesis via DAP pathway; LL-2,6-diaminopimelate from (S)-tetrahydrodipicolinate (acetylase route): step 1/3. In terms of biological role, catalyzes the transfer of an acetyl group from acetyl-CoA to tetrahydrodipicolinate. This chain is 2,3,4,5-tetrahydropyridine-2,6-dicarboxylate N-acetyltransferase, found in Thermosipho africanus (strain TCF52B).